The chain runs to 209 residues: Octanoyltransferase (209 aa).

The 176-residue stretch at 28–203 (NATPETLLLL…RFQGLLDEWL (176 aa)) folds into the BPL/LPL catalytic domain. Substrate-binding positions include 66-73 (RGGDVTFH), 133-135 (AIG), and 146-148 (GFA). Residue cysteine 164 is the Acyl-thioester intermediate of the active site.

This sequence belongs to the LipB family.

The protein resides in the cytoplasm. The catalysed reaction is octanoyl-[ACP] + L-lysyl-[protein] = N(6)-octanoyl-L-lysyl-[protein] + holo-[ACP] + H(+). The protein operates within protein modification; protein lipoylation via endogenous pathway; protein N(6)-(lipoyl)lysine from octanoyl-[acyl-carrier-protein]: step 1/2. Its function is as follows. Catalyzes the transfer of endogenously produced octanoic acid from octanoyl-acyl-carrier-protein onto the lipoyl domains of lipoate-dependent enzymes. Lipoyl-ACP can also act as a substrate although octanoyl-ACP is likely to be the physiological substrate. This chain is Octanoyltransferase, found in Pelobacter propionicus (strain DSM 2379 / NBRC 103807 / OttBd1).